A 415-amino-acid chain; its full sequence is Packaging protein 3 (415 aa).

Residues 1-55 are disordered; the sequence is MHPVLRQMRPPPQQRQEQEQRQTCRAPSPPPTASGGATSAVDAAADGDYEPPRRR. The tract at residues 1–173 is interaction with packaging protein 1; sequence MHPVLRQMRP…VNQEINFQKS (173 aa). A phosphoserine; by host mark is found at S75 and S360. Residues 381–394 show a composition bias toward low complexity; sequence GAGPGLAVAPARAG. The tract at residues 381–415 is disordered; the sequence is GAGPGLAVAPARAGNVGGVEEYDEDDEYEPEDGEY. Over residues 400 to 415 the composition is skewed to acidic residues; sequence EEYDEDDEYEPEDGEY.

The protein belongs to the adenoviridae packaging protein 3 family. As to quaternary structure, part of the genome packaging complex composed of packaging proteins 1, 2 and 3; this complex specifically binds to the packaging sequence on the left end of viral genomic DNA and performs packaging of the viral genome. Interacts with hexon-linking protein IIIa; this interaction is required to promote correct genome packaging. Cleaved at different sites by the viral protease during virion maturation.

The protein localises to the host nucleus. Functionally, involved in viral genome packaging through its interaction with packaging proteins 1 and 2. After proteolytic cleavage by adenovirus protease, L1 52/55k protein is removed from the capsid during viral maturation. This Homo sapiens (Human) protein is Packaging protein 3.